The following is a 1243-amino-acid chain: Inositol hexakisphosphate and diphosphoinositol-pentakisphosphate kinase 2 (1243 aa).

Ser-38 is subject to Phosphoserine. Position 53-54 (53-54 (KK)) interacts with substrate. The ATP site is built by Arg-134, Lys-187, His-194, and Arg-213. Residue 213–214 (RK) participates in substrate binding. A Phosphoserine modification is found at Ser-223. ATP contacts are provided by residues 237–240 (EEFM) and 246–248 (DVK). Positions 248 and 262 each coordinate substrate. ATP-binding positions include Ser-264, Asp-309, and 321–323 (DVN). 326–329 (SFVK) is a binding site for substrate. A polyphosphoinositide-binding domain region spans residues 371–442 (PTTSGTMMEL…VLDIARQLLM (72 aa)). 2 disordered regions span residues 898-941 (KGCE…RDEV) and 957-1016 (HIHR…SPVS). Basic and acidic residues predominate over residues 915-941 (ASRENEGRRPFKIDNDDEPHTSKRDEV). Residues 958 to 969 (IHRKSPLPRSRK) show a composition bias toward basic residues. Phosphoserine occurs at positions 1006, 1016, 1074, 1091, 1165, 1172, and 1180. The tract at residues 1185-1243 (TPAKILPTPPATLKSTKASSKPATSGPSSAVVPNTSSRKKNITSKTETHEHKKNTGKKK) is disordered. The segment covering 1195–1209 (ATLKSTKASSKPATS) has biased composition (low complexity). Residues 1210 to 1220 (GPSSAVVPNTS) show a composition bias toward polar residues. Residues Ser-1220 and Ser-1221 each carry the phosphoserine modification.

It belongs to the histidine acid phosphatase family. VIP1 subfamily.

The protein localises to the cytoplasm. It localises to the cytosol. It catalyses the reaction 1D-myo-inositol hexakisphosphate + ATP = 1-diphospho-1D-myo-inositol 2,3,4,5,6-pentakisphosphate + ADP. It carries out the reaction 5-diphospho-1D-myo-inositol 1,2,3,4,6-pentakisphosphate + ATP + H(+) = 1,5-bis(diphospho)-1D-myo-inositol 2,3,4,6-tetrakisphosphate + ADP. In terms of biological role, bifunctional inositol kinase that acts in concert with the IP6K kinases IP6K1, IP6K2 and IP6K3 to synthesize the diphosphate group-containing inositol pyrophosphates diphosphoinositol pentakisphosphate, PP-InsP5, and bis-diphosphoinositol tetrakisphosphate, (PP)2-InsP4. PP-InsP5 and (PP)2-InsP4, also respectively called InsP7 and InsP8, regulate a variety of cellular processes, including apoptosis, vesicle trafficking, cytoskeletal dynamics, exocytosis, insulin signaling and neutrophil activation. Phosphorylates inositol hexakisphosphate (InsP6) at position 1 to produce PP-InsP5 which is in turn phosphorylated by IP6Ks to produce (PP)2-InsP4. Alternatively, phosphorylates PP-InsP5 at position 1, produced by IP6Ks from InsP6, to produce (PP)2-InsP4. Required for normal hearing. The polypeptide is Inositol hexakisphosphate and diphosphoinositol-pentakisphosphate kinase 2 (Homo sapiens (Human)).